A 2296-amino-acid chain; its full sequence is Protein Ycf2 (2296 aa).

Position 1650 to 1657 (G1650 to S1657) interacts with ATP.

The protein belongs to the Ycf2 family.

It is found in the plastid. The protein resides in the chloroplast stroma. In terms of biological role, probable ATPase of unknown function. Its presence in a non-photosynthetic plant (Epifagus virginiana) and experiments in tobacco indicate that it has an essential function which is probably not related to photosynthesis. This is Protein Ycf2 from Arabis hirsuta (Hairy rock-cress).